Here is a 150-residue protein sequence, read N- to C-terminus: Arginine repressor (150 aa).

The protein belongs to the ArgR family.

Its subcellular location is the cytoplasm. It functions in the pathway amino-acid biosynthesis; L-arginine biosynthesis [regulation]. In terms of biological role, regulates arginine biosynthesis genes. The sequence is that of Arginine repressor from Finegoldia magna (strain ATCC 29328 / DSM 20472 / WAL 2508) (Peptostreptococcus magnus).